The chain runs to 443 residues: uncharacterized protein (443 aa).

Catalysis depends on proton acceptor residues histidine 164 and aspartate 386.

The protein belongs to the plant acyltransferase family.

This is an uncharacterized protein from Arabidopsis thaliana (Mouse-ear cress).